Reading from the N-terminus, the 325-residue chain is Structure-specific endonuclease subunit SLX1 (325 aa).

The GIY-YIG domain occupies 10-92 (ALYTVYILRS…NNPHLSMHIP (83 aa)). Residues 230 to 284 (CVVCREEMKSGEGLHAVCTHEGCDGVGHISCWSRSFLKNNDTGSILPVQGQCPMC) form an SLX1-type zinc finger.

It belongs to the SLX1 family. As to quaternary structure, forms a heterodimer with SLX4. The cofactor is a divalent metal cation.

The protein resides in the nucleus. Functionally, catalytic subunit of the SLX1-SLX4 structure-specific endonuclease that resolves DNA secondary structures generated during DNA repair and recombination. Has endonuclease activity towards branched DNA substrates, introducing single-strand cuts in duplex DNA close to junctions with ss-DNA. The sequence is that of Structure-specific endonuclease subunit SLX1 from Chaetomium globosum (strain ATCC 6205 / CBS 148.51 / DSM 1962 / NBRC 6347 / NRRL 1970) (Soil fungus).